The sequence spans 541 residues: Phosphoenolpyruvate carboxykinase (ATP) (541 aa).

ATP is bound at residue 243-250 (GLSGTGKT).

Belongs to the phosphoenolpyruvate carboxykinase (ATP) family.

The enzyme catalyses oxaloacetate + ATP = phosphoenolpyruvate + ADP + CO2. It functions in the pathway carbohydrate biosynthesis; gluconeogenesis. The protein is Phosphoenolpyruvate carboxykinase (ATP) (PCK1) of Eremothecium gossypii (strain ATCC 10895 / CBS 109.51 / FGSC 9923 / NRRL Y-1056) (Yeast).